The chain runs to 674 residues: Sodium/myo-inositol cotransporter 2 (674 aa).

Over 1–27 the chain is Extracellular; that stretch reads MESSTSSPQPPLSDPLDPFPQRSLEPG. The helical transmembrane segment at 28-48 threads the bilayer; sequence DIAVLVLYFLFVLAVGLWSTV. Residues 49-56 are Cytoplasmic-facing; sequence KTKRDTVK. A helical membrane pass occupies residues 57 to 77; the sequence is GYFLAGGDMVWWPVGASLFAS. Over 78-102 the chain is Extracellular; sequence NVGSGHFVGLAGSGAATGISVAAYE. The chain crosses the membrane as a helical span at residues 103 to 123; it reads FNGMFSVLMLAWIFLPIYIAG. Residues 124-140 lie on the Cytoplasmic side of the membrane; it reads QVTTMPEYLRRRFGGSR. The helical transmembrane segment at 141-161 threads the bilayer; sequence IAITLAVLYLFIYIFTKISVD. The Extracellular portion of the chain corresponds to 162–180; sequence MYAGAIFIQQSLHLDLYLS. The chain crosses the membrane as a helical span at residues 181–201; the sequence is VVGLLAVTALYTVAGGLAAVI. At 202–208 the chain is on the cytoplasmic side; sequence YTDALQT. The chain crosses the membrane as a helical span at residues 209-229; that stretch reads LIMLVGALTLMGYSFAAVGGM. At 230–272 the chain is on the extracellular side; it reads EGLQEKYFLALPSNRSENSSCGLPREDAFHLFRDPLTSDLPWP. A helical membrane pass occupies residues 273-293; sequence GILFGMSIPSLWYWCTDQVIV. Over 294–308 the chain is Cytoplasmic; sequence QRSLAAKNLSHAKGG. A helical transmembrane segment spans residues 309–329; the sequence is SLMAAYLKVLPLFIMVFPGMV. Residues 330–375 are Extracellular-facing; the sequence is SRILFPDQVACADPETCQRVCNNPSGCSDIAYPKLVLELLPTGLRG. A helical transmembrane segment spans residues 376-396; that stretch reads LMMAVMVAALMSSLTSIFNSA. The Cytoplasmic segment spans residues 397-418; that stretch reads STIFTMDLWNHVRPRASEKELM. Residues 419-439 form a helical membrane-spanning segment; it reads IVGRVFVLLLVLVSVLWIPVV. At 440 to 446 the chain is on the extracellular side; the sequence is QASQGGQ. A helical membrane pass occupies residues 447–467; sequence LFVYIQAISSYLQPPVAMVFV. Topologically, residues 468–479 are cytoplasmic; sequence LGCFWKRANEKG. Residues 480–500 traverse the membrane as a helical segment; sequence AFWGLVLGLLLGFIRLILDFI. The Extracellular portion of the chain corresponds to 501 to 521; that stretch reads YVEPACHQPDERPSVVKNVHY. Residues 522–542 traverse the membrane as a helical segment; the sequence is LYFSMILSSVTVLTVTVMSLL. At 543–653 the chain is on the cytoplasmic side; the sequence is TEPPSKEMIS…SIEENPVVKT (111 aa). Residues 654–674 traverse the membrane as a helical segment; it reads LLDVNCLLCICCAFFLWGYFA.

The protein belongs to the sodium:solute symporter (SSF) (TC 2.A.21) family. Expressed in brain, lung and kidney. In the kidney, strongly expressed in the cortex, at the luminal side of proximal convoluted tubules and in BBMVs. Weaker expression observed in the medulla (at protein level).

It localises to the membrane. Its subcellular location is the apical cell membrane. The enzyme catalyses myo-inositol(out) + 2 Na(+)(out) = myo-inositol(in) + 2 Na(+)(in). The catalysed reaction is 1D-chiro-inositol(out) + 2 Na(+)(out) = 1D-chiro-inositol(in) + 2 Na(+)(in). It catalyses the reaction D-glucose(out) + 2 Na(+)(out) = D-glucose(in) + 2 Na(+)(in). It carries out the reaction D-xylose(out) + 2 Na(+)(out) = D-xylose(in) + 2 Na(+)(in). Its activity is regulated as follows. MI transport activity stimulated five-fold under 24 hour hypertonic shock conditions. MI inward currents were gradually inhibited as increasing amounts of phlorizin were added to the superfusion medium. When sodium is replaced by potassium, MI uptake is dramatically reduced and in the presence of L-fucose or D-chiro-inositol (DCI), the specific accumulation of tracer amounts of MI is also reduced. In terms of biological role, involved in the sodium-dependent cotransport of myo-inositol (MI) with a Na(+):MI stoichiometry of 2:1. Exclusively responsible for apical MI transport and absorption in intestine. Can also transport D-chiro-inositol (DCI) but not L-fucose. Exhibits stereospecific cotransport of both D-glucose and D-xylose. May induce apoptosis through the TNF-alpha, PDCD1 pathway. May play a role in the regulation of MI concentration in serum, involving reabsorption in at least the proximal tubule of the kidney. This is Sodium/myo-inositol cotransporter 2 from Oryctolagus cuniculus (Rabbit).